Consider the following 342-residue polypeptide: Glycerol-3-phosphate dehydrogenase [NAD(P)+] (342 aa).

Residues Trp-11, Arg-31, and Lys-102 each coordinate NADPH. Positions 102 and 132 each coordinate sn-glycerol 3-phosphate. Ala-136 contacts NADPH. Sn-glycerol 3-phosphate is bound by residues Lys-187, Asp-240, Ser-250, Arg-251, and Asn-252. Residue Lys-187 is the Proton acceptor of the active site. Arg-251 contributes to the NADPH binding site. An NADPH-binding site is contributed by Glu-277.

Belongs to the NAD-dependent glycerol-3-phosphate dehydrogenase family.

The protein resides in the cytoplasm. The catalysed reaction is sn-glycerol 3-phosphate + NAD(+) = dihydroxyacetone phosphate + NADH + H(+). It carries out the reaction sn-glycerol 3-phosphate + NADP(+) = dihydroxyacetone phosphate + NADPH + H(+). The protein operates within membrane lipid metabolism; glycerophospholipid metabolism. Its function is as follows. Catalyzes the reduction of the glycolytic intermediate dihydroxyacetone phosphate (DHAP) to sn-glycerol 3-phosphate (G3P), the key precursor for phospholipid synthesis. This Symbiobacterium thermophilum (strain DSM 24528 / JCM 14929 / IAM 14863 / T) protein is Glycerol-3-phosphate dehydrogenase [NAD(P)+].